The primary structure comprises 467 residues: ATP synthase subunit beta (467 aa).

Residue 157-164 (GGAGVGKT) coordinates ATP.

Belongs to the ATPase alpha/beta chains family. In terms of assembly, F-type ATPases have 2 components, CF(1) - the catalytic core - and CF(0) - the membrane proton channel. CF(1) has five subunits: alpha(3), beta(3), gamma(1), delta(1), epsilon(1). CF(0) has three main subunits: a(1), b(2) and c(9-12). The alpha and beta chains form an alternating ring which encloses part of the gamma chain. CF(1) is attached to CF(0) by a central stalk formed by the gamma and epsilon chains, while a peripheral stalk is formed by the delta and b chains.

The protein localises to the cell inner membrane. It catalyses the reaction ATP + H2O + 4 H(+)(in) = ADP + phosphate + 5 H(+)(out). Produces ATP from ADP in the presence of a proton gradient across the membrane. The catalytic sites are hosted primarily by the beta subunits. In Desulfosudis oleivorans (strain DSM 6200 / JCM 39069 / Hxd3) (Desulfococcus oleovorans), this protein is ATP synthase subunit beta.